Consider the following 480-residue polypeptide: 3-isopropylmalate dehydratase large subunit (480 aa).

Positions 357, 417, and 420 each coordinate [4Fe-4S] cluster. The span at 431–441 (GQRCASTSNRN) shows a compositional bias: polar residues. Residues 431 to 454 (GQRCASTSNRNFEGRQGKGGRTHL) are disordered.

This sequence belongs to the aconitase/IPM isomerase family. LeuC type 1 subfamily. As to quaternary structure, heterodimer of LeuC and LeuD. [4Fe-4S] cluster serves as cofactor.

It carries out the reaction (2R,3S)-3-isopropylmalate = (2S)-2-isopropylmalate. It participates in amino-acid biosynthesis; L-leucine biosynthesis; L-leucine from 3-methyl-2-oxobutanoate: step 2/4. Its function is as follows. Catalyzes the isomerization between 2-isopropylmalate and 3-isopropylmalate, via the formation of 2-isopropylmaleate. In Mycobacteroides abscessus (strain ATCC 19977 / DSM 44196 / CCUG 20993 / CIP 104536 / JCM 13569 / NCTC 13031 / TMC 1543 / L948) (Mycobacterium abscessus), this protein is 3-isopropylmalate dehydratase large subunit.